The chain runs to 221 residues: RNA pyrophosphohydrolase (221 aa).

Residues 6–149 (GFRPNVGIVL…KRSVYALALT (144 aa)) enclose the Nudix hydrolase domain. Positions 38 to 59 (GGIDRGETPEQAMFRELHEEVG) match the Nudix box motif.

This sequence belongs to the Nudix hydrolase family. RppH subfamily. Requires a divalent metal cation as cofactor.

Its function is as follows. Accelerates the degradation of transcripts by removing pyrophosphate from the 5'-end of triphosphorylated RNA, leading to a more labile monophosphorylated state that can stimulate subsequent ribonuclease cleavage. The chain is RNA pyrophosphohydrolase from Verminephrobacter eiseniae (strain EF01-2).